Consider the following 256-residue polypeptide: Proteasome subunit alpha (256 aa).

The interval 235 to 256 (ELDSNGSDGNGDAPELNGGSSD) is disordered.

Belongs to the peptidase T1A family. The 20S proteasome core is composed of 14 alpha and 14 beta subunits that assemble into four stacked heptameric rings, resulting in a barrel-shaped structure. The two inner rings, each composed of seven catalytic beta subunits, are sandwiched by two outer rings, each composed of seven alpha subunits. The catalytic chamber with the active sites is on the inside of the barrel. Has a gated structure, the ends of the cylinder being occluded by the N-termini of the alpha-subunits. Is capped by the proteasome-associated ATPase, ARC.

It localises to the cytoplasm. Its pathway is protein degradation; proteasomal Pup-dependent pathway. With respect to regulation, the formation of the proteasomal ATPase ARC-20S proteasome complex, likely via the docking of the C-termini of ARC into the intersubunit pockets in the alpha-rings, may trigger opening of the gate for substrate entry. Interconversion between the open-gate and close-gate conformations leads to a dynamic regulation of the 20S proteasome proteolysis activity. Functionally, component of the proteasome core, a large protease complex with broad specificity involved in protein degradation. The chain is Proteasome subunit alpha from Mycolicibacterium paratuberculosis (strain ATCC BAA-968 / K-10) (Mycobacterium paratuberculosis).